Consider the following 466-residue polypeptide: 55 kDa erythrocyte membrane protein (466 aa).

Position 2 is an N-acetylthreonine (T2). A phosphoserine mark is found at S13 and S19. At T49 the chain carries Phosphothreonine. Residues S52, S57, and S110 each carry the phosphoserine modification. The region spanning 71 to 152 is the PDZ domain; the sequence is LIQFEKVTEE…MISLKVIPNQ (82 aa). In terms of domain architecture, SH3 spans 158–228; sequence ALQMFMRAQF…PSPELQEWRV (71 aa). S243 carries the post-translational modification Phosphoserine. The segment at 268 to 466 is interaction with PALS1; that stretch reads VVSYEEVVRL…PQWVPVSWVY (199 aa). In terms of domain architecture, Guanylate kinase-like spans 282–451; sequence RKTLVLIGAS…TLKKLQEAFD (170 aa).

This sequence belongs to the MAGUK family. Heterodimer with PALS1. Interacts with DLG5 and NF2. Interacts (via guanylate kinase-like domain) with WHRN (via third PDZ domain). Post-translationally, palmitoylated.

The protein resides in the cell membrane. The protein localises to the cell projection. Its subcellular location is the stereocilium. Functionally, essential regulator of neutrophil polarity. Regulates neutrophil polarization by regulating AKT1 phosphorylation through a mechanism that is independent of PIK3CG activity. This Pongo abelii (Sumatran orangutan) protein is 55 kDa erythrocyte membrane protein (MPP1).